A 112-amino-acid polypeptide reads, in one-letter code: uncharacterized protein (112 aa).

Residues 62-82 (THSFIFFILFLFIFIFLTFSH) form a helical membrane-spanning segment.

Its subcellular location is the membrane. This is an uncharacterized protein from Saccharomyces cerevisiae (strain ATCC 204508 / S288c) (Baker's yeast).